The following is a 510-amino-acid chain: Beta-glucosidase 34 (510 aa).

Residues 1-26 (MGNGGRCMVEVVILLVLMAMSQGCDA) form the signal peptide. N-linked (GlcNAc...) asparagine glycosylation occurs at asparagine 28. Glutamine 52 serves as a coordination point for a beta-D-glucoside. An N-linked (GlcNAc...) asparagine glycan is attached at asparagine 120. A beta-D-glucoside is bound by residues histidine 153 and 198–199 (NE). The active-site Proton donor is glutamate 199. A disulfide bridge links cysteine 218 with cysteine 226. 2 N-linked (GlcNAc...) asparagine glycosylation sites follow: asparagine 279 and asparagine 331. Tyrosine 342 lines the a beta-D-glucoside pocket. An N-linked (GlcNAc...) asparagine glycan is attached at asparagine 360. A beta-D-glucoside is bound by residues glutamate 415, tryptophan 465, 472-473 (EW), and phenylalanine 481. Glutamate 415 functions as the Nucleophile in the catalytic mechanism.

It belongs to the glycosyl hydrolase 1 family.

The catalysed reaction is Hydrolysis of terminal, non-reducing beta-D-glucosyl residues with release of beta-D-glucose.. This is Beta-glucosidase 34 (BGLU34) from Oryza sativa subsp. japonica (Rice).